A 256-amino-acid chain; its full sequence is Thiazole synthase (256 aa).

Lys-96 functions as the Schiff-base intermediate with DXP in the catalytic mechanism. 1-deoxy-D-xylulose 5-phosphate contacts are provided by residues Gly-157, Ala-183 to Gly-184, and Asn-205 to Thr-206.

This sequence belongs to the ThiG family. As to quaternary structure, homotetramer. Forms heterodimers with either ThiH or ThiS.

It is found in the cytoplasm. It catalyses the reaction [ThiS sulfur-carrier protein]-C-terminal-Gly-aminoethanethioate + 2-iminoacetate + 1-deoxy-D-xylulose 5-phosphate = [ThiS sulfur-carrier protein]-C-terminal Gly-Gly + 2-[(2R,5Z)-2-carboxy-4-methylthiazol-5(2H)-ylidene]ethyl phosphate + 2 H2O + H(+). Its pathway is cofactor biosynthesis; thiamine diphosphate biosynthesis. Catalyzes the rearrangement of 1-deoxy-D-xylulose 5-phosphate (DXP) to produce the thiazole phosphate moiety of thiamine. Sulfur is provided by the thiocarboxylate moiety of the carrier protein ThiS. In vitro, sulfur can be provided by H(2)S. The polypeptide is Thiazole synthase (Bacillus mycoides (strain KBAB4) (Bacillus weihenstephanensis)).